The chain runs to 311 residues: m7GpppX diphosphatase (311 aa).

Substrate contacts are provided by residues glutamate 159, lysine 181, and histidine 242 to histidine 253. Positions histidine 249 to histidine 253 match the Histidine triad motif motif. Histidine 251 (nucleophile) is an active-site residue.

Belongs to the HIT family. As to expression, expressed in neurons in the ventral cord, the nerve ring and the pharynx.

It localises to the nucleus. The enzyme catalyses a 5'-end (N(7)-methyl 5'-triphosphoguanosine)-ribonucleoside in mRNA + H2O = N(7)-methyl-GMP + a 5'-end diphospho-ribonucleoside in mRNA + 2 H(+). The catalysed reaction is a 5'-end (N(2),N(2),N(7)-trimethyl 5'-triphosphoguanosine)-ribonucleoside in mRNA + H2O = (N(2),N(2),N(7))-trimethyl-GMP + a 5'-end diphospho-ribonucleoside in mRNA + 2 H(+). The hydrolytic product 7-methylguanosine diphosphate (m7GDP) efficiently inhibits the decapping scavenger activity and acts as a competitive inhibitor in vitro. Functionally, decapping scavenger enzyme that catalyzes the cleavage of a residual cap structure following the degradation of mRNAs of the 3'-&gt;5' exosome-mediated mRNA decay pathway. Hydrolyzes cap analog structures like 7-methylguanosine nucleoside triphosphate (m7GpppG) and tri-methyl guanosine nucleoside triphosphate (m3(2,2,7)GpppG) with up to 2 nucleotide substrates (small capped oligoribonucleotides) and specifically releases 5'-phosphorylated RNA fragments and 7-methylguanosine monophosphate (m7GMP). Does not hydrolyze unmethylated cap analog (GpppG) and shows no decapping activity on intact m7GpppG-capped mRNA molecules. Does not hydrolyze 7-methylguanosine diphosphate (m7GDP) and tri-methylguanosine diphosphate (m3(2,2,7)GDP) to m(7)GMP and m3(2,2,7)GMP, respectively. May also play a role in the 5'-&gt;3 mRNA decay pathway; m7GDP, the downstream product released by the 5'-&gt;3' mRNA mediated decapping activity, may be also converted by dcs-1 to m7GMP. Binds to m7GpppG and strongly to m7GDP. The polypeptide is m7GpppX diphosphatase (dcs-1) (Caenorhabditis elegans).